The following is a 468-amino-acid chain: 6-phospho-beta-galactosidase (468 aa).

D-galactose 6-phosphate-binding residues include Gln19, His116, Asn159, Glu160, and Asn297. Glu160 serves as the catalytic Proton donor. The Nucleophile role is filled by Glu375. 4 residues coordinate D-galactose 6-phosphate: Ser428, Trp429, Lys435, and Tyr437.

It belongs to the glycosyl hydrolase 1 family.

It catalyses the reaction a 6-phospho-beta-D-galactoside + H2O = D-galactose 6-phosphate + an alcohol. Its pathway is carbohydrate metabolism; lactose degradation; D-galactose 6-phosphate and beta-D-glucose from lactose 6-phosphate: step 1/1. This chain is 6-phospho-beta-galactosidase, found in Streptococcus pyogenes serotype M1.